The sequence spans 314 residues: 2-dehydro-3-deoxygluconokinase (314 aa).

Residues 28-32, Tyr88, 102-104, and Arg170 each bind substrate; these read GDTLN and YWR. ATP contacts are provided by residues 168–170, 228–233, and 260–263; these read NYR, KCGKNG, and SAGD. Asp263 is a binding site for substrate. Asp263 serves as the catalytic Proton acceptor.

It belongs to the carbohydrate kinase PfkB family.

The enzyme catalyses 2-dehydro-3-deoxy-D-gluconate + ATP = 2-dehydro-3-deoxy-6-phospho-D-gluconate + ADP + H(+). The protein operates within carbohydrate acid metabolism; 2-dehydro-3-deoxy-D-gluconate degradation; D-glyceraldehyde 3-phosphate and pyruvate from 2-dehydro-3-deoxy-D-gluconate: step 1/2. In terms of biological role, catalyzes the phosphorylation of 2-keto-3-deoxygluconate (KDG) to produce 2-keto-3-deoxy-6-phosphogluconate (KDPG). The sequence is that of 2-dehydro-3-deoxygluconokinase (kdgK) from Haemophilus influenzae (strain ATCC 51907 / DSM 11121 / KW20 / Rd).